The chain runs to 268 residues: Hydroxyethylthiazole kinase (268 aa).

Position 46 (Met-46) interacts with substrate. The ATP site is built by Arg-122 and Thr-168. Position 195 (Gly-195) interacts with substrate.

Belongs to the Thz kinase family. Requires Mg(2+) as cofactor.

The enzyme catalyses 5-(2-hydroxyethyl)-4-methylthiazole + ATP = 4-methyl-5-(2-phosphooxyethyl)-thiazole + ADP + H(+). Its pathway is cofactor biosynthesis; thiamine diphosphate biosynthesis; 4-methyl-5-(2-phosphoethyl)-thiazole from 5-(2-hydroxyethyl)-4-methylthiazole: step 1/1. Its function is as follows. Catalyzes the phosphorylation of the hydroxyl group of 4-methyl-5-beta-hydroxyethylthiazole (THZ). This Desulfatibacillum aliphaticivorans protein is Hydroxyethylthiazole kinase.